A 364-amino-acid chain; its full sequence is Fructose-bisphosphate aldolase C (364 aa).

A Phosphotyrosine modification is found at Tyr-5. A phosphoserine mark is found at Ser-36, Ser-39, and Ser-45. Arg-56 contacts substrate. Lys-111 carries the post-translational modification N6-acetyllysine. Residue Ser-132 is modified to Phosphoserine. Residue Lys-147 coordinates substrate. The Proton acceptor role is filled by Glu-188. Lys-230 serves as the catalytic Schiff-base intermediate with dihydroxyacetone-P.

Belongs to the class I fructose-bisphosphate aldolase family. In terms of assembly, homotetramer. Interacts with ATP6V1E1.

It catalyses the reaction beta-D-fructose 1,6-bisphosphate = D-glyceraldehyde 3-phosphate + dihydroxyacetone phosphate. Its pathway is carbohydrate degradation; glycolysis; D-glyceraldehyde 3-phosphate and glycerone phosphate from D-glucose: step 4/4. This chain is Fructose-bisphosphate aldolase C (ALDOC), found in Pan troglodytes (Chimpanzee).